We begin with the raw amino-acid sequence, 68 residues long: ATP synthase F(0) complex subunit 8 (68 aa).

A helical membrane pass occupies residues threonine 8 to phenylalanine 24. At lysine 54 the chain carries N6-acetyllysine; alternate. Lysine 54 is subject to N6-succinyllysine; alternate. Lysine 57 is modified (N6-acetyllysine).

This sequence belongs to the ATPase protein 8 family. As to quaternary structure, component of the ATP synthase complex composed at least of ATP5F1A/subunit alpha, ATP5F1B/subunit beta, ATP5MC1/subunit c (homooctomer), MT-ATP6/subunit a, MT-ATP8/subunit 8, ATP5ME/subunit e, ATP5MF/subunit f, ATP5MG/subunit g, ATP5MK/subunit k, ATP5MJ/subunit j, ATP5F1C/subunit gamma, ATP5F1D/subunit delta, ATP5F1E/subunit epsilon, ATP5PF/subunit F6, ATP5PB/subunit b, ATP5PD/subunit d, ATP5PO/subunit OSCP. ATP synthase complex consists of a soluble F(1) head domain (subunits alpha(3) and beta(3)) - the catalytic core - and a membrane F(0) domain - the membrane proton channel (subunits c, a, 8, e, f, g, k and j). These two domains are linked by a central stalk (subunits gamma, delta, and epsilon) rotating inside the F1 region and a stationary peripheral stalk (subunits F6, b, d, and OSCP). Interacts with PRICKLE3.

It is found in the mitochondrion membrane. Functionally, subunit 8, of the mitochondrial membrane ATP synthase complex (F(1)F(0) ATP synthase or Complex V) that produces ATP from ADP in the presence of a proton gradient across the membrane which is generated by electron transport complexes of the respiratory chain. ATP synthase complex consist of a soluble F(1) head domain - the catalytic core - and a membrane F(1) domain - the membrane proton channel. These two domains are linked by a central stalk rotating inside the F(1) region and a stationary peripheral stalk. During catalysis, ATP synthesis in the catalytic domain of F(1) is coupled via a rotary mechanism of the central stalk subunits to proton translocation. In vivo, can only synthesize ATP although its ATP hydrolase activity can be activated artificially in vitro. Part of the complex F(0) domain. This chain is ATP synthase F(0) complex subunit 8, found in Hippopotamus amphibius (Hippopotamus).